The following is a 378-amino-acid chain: MSHLDNGFRSLTLQRFPATDDVNPLQAWEAADEYLLQQLDDTEILGPVLILNDAFGALSCALAEHKPYSIGDSYISELATRENLRLNGIDESSVKFLDSTADYPQQPGVVLIKVPKTLALLEQQLRALRKVVTSDTRIIAGAKARDIHTSTLELFEKVLGPTTTTLAWKKARLINCTFNEPPLADAPQTVSWKLEGTDWTIHNHANVFSRTGLDIGARFFMQHLPENLEGEIVDLGCGNGVIGLTLLDKNPQAKVVFVDESPMAVASSRLNVETNMPEALDRSEFMINNALSGVEPFRFNAVLCNPPFHQQHALTDNVAWEMFHYARRCLKINGELYIVANRHLDYFHKLKKIFGNCTTIATNNKFVVLKAVKLGRRR.

Belongs to the methyltransferase superfamily. RlmG family.

The protein localises to the cytoplasm. The enzyme catalyses guanosine(1835) in 23S rRNA + S-adenosyl-L-methionine = N(2)-methylguanosine(1835) in 23S rRNA + S-adenosyl-L-homocysteine + H(+). Functionally, specifically methylates the guanine in position 1835 (m2G1835) of 23S rRNA. This Shigella flexneri protein is Ribosomal RNA large subunit methyltransferase G.